A 276-amino-acid chain; its full sequence is Undecaprenyl-diphosphatase (276 aa).

Helical transmembrane passes span 43–63, 85–105, 109–129, 183–203, 218–238, and 254–274; these read RAMA…VWEF, LNLL…ADTI, LFNA…MLWA, AATE…AVYS, VFAI…RGLL, and IAFG…WASA.

Belongs to the UppP family.

The protein resides in the cell inner membrane. It catalyses the reaction di-trans,octa-cis-undecaprenyl diphosphate + H2O = di-trans,octa-cis-undecaprenyl phosphate + phosphate + H(+). Its function is as follows. Catalyzes the dephosphorylation of undecaprenyl diphosphate (UPP). Confers resistance to bacitracin. The sequence is that of Undecaprenyl-diphosphatase from Pseudomonas syringae pv. syringae (strain B728a).